A 123-amino-acid chain; its full sequence is Large ribosomal subunit protein bL20 (123 aa).

Residues 1-15 show a composition bias toward basic residues; the sequence is MARVKRSVNAKKKRR. The interval 1-23 is disordered; sequence MARVKRSVNAKKKRREVLDQASG.

Belongs to the bacterial ribosomal protein bL20 family.

Binds directly to 23S ribosomal RNA and is necessary for the in vitro assembly process of the 50S ribosomal subunit. It is not involved in the protein synthesizing functions of that subunit. In Cutibacterium acnes (strain DSM 16379 / KPA171202) (Propionibacterium acnes), this protein is Large ribosomal subunit protein bL20.